The primary structure comprises 316 residues: MQILLANPRGFCAGVDRAISIVENALAIYGAPIYVRHEVVHNRYVVDSLRQRGAIFIEQISEVPDGAILIFSAHGVSQAVRNEAKSRDLTVFDATCPLVTKVHMEVARASRRGEESILIGHAGHPEVEGTMGQYSNPEGGMYLVESPEDVWTLNVKNEGKLSFMTQTTLSVDDTSDVIDALRKRFPKIVGPRKDDICYATTNRQEAVRALAEQADVVLVVGSKNSSNSNRLAELAQRMGRTAFLIDDAADIQEAWVKDAACVGVTAGASAPDILVQNVIARLREFGGGEAVTLEGREENIVFEVPKELRVDVREVE.

Residue C12 coordinates [4Fe-4S] cluster. Residues H41 and H74 each coordinate (2E)-4-hydroxy-3-methylbut-2-enyl diphosphate. Residues H41 and H74 each contribute to the dimethylallyl diphosphate site. Isopentenyl diphosphate-binding residues include H41 and H74. Residue C96 coordinates [4Fe-4S] cluster. H124 provides a ligand contact to (2E)-4-hydroxy-3-methylbut-2-enyl diphosphate. H124 contributes to the dimethylallyl diphosphate binding site. H124 is a binding site for isopentenyl diphosphate. E126 (proton donor) is an active-site residue. T167 lines the (2E)-4-hydroxy-3-methylbut-2-enyl diphosphate pocket. A [4Fe-4S] cluster-binding site is contributed by C197. S225, S226, N227, and S269 together coordinate (2E)-4-hydroxy-3-methylbut-2-enyl diphosphate. Dimethylallyl diphosphate-binding residues include S225, S226, N227, and S269. Isopentenyl diphosphate contacts are provided by S225, S226, N227, and S269.

This sequence belongs to the IspH family. Homodimer. It depends on [4Fe-4S] cluster as a cofactor.

It catalyses the reaction isopentenyl diphosphate + 2 oxidized [2Fe-2S]-[ferredoxin] + H2O = (2E)-4-hydroxy-3-methylbut-2-enyl diphosphate + 2 reduced [2Fe-2S]-[ferredoxin] + 2 H(+). The catalysed reaction is dimethylallyl diphosphate + 2 oxidized [2Fe-2S]-[ferredoxin] + H2O = (2E)-4-hydroxy-3-methylbut-2-enyl diphosphate + 2 reduced [2Fe-2S]-[ferredoxin] + 2 H(+). It functions in the pathway isoprenoid biosynthesis; dimethylallyl diphosphate biosynthesis; dimethylallyl diphosphate from (2E)-4-hydroxy-3-methylbutenyl diphosphate: step 1/1. Its pathway is isoprenoid biosynthesis; isopentenyl diphosphate biosynthesis via DXP pathway; isopentenyl diphosphate from 1-deoxy-D-xylulose 5-phosphate: step 6/6. In terms of biological role, catalyzes the conversion of 1-hydroxy-2-methyl-2-(E)-butenyl 4-diphosphate (HMBPP) into a mixture of isopentenyl diphosphate (IPP) and dimethylallyl diphosphate (DMAPP). Acts in the terminal step of the DOXP/MEP pathway for isoprenoid precursor biosynthesis. The chain is 4-hydroxy-3-methylbut-2-enyl diphosphate reductase from Salmonella typhi.